A 369-amino-acid polypeptide reads, in one-letter code: Biglycan (369 aa).

The first 16 residues, methionine 1–alanine 16, serve as a signal peptide directing secretion. A propeptide spanning residues leucine 17–asparagine 37 is cleaved from the precursor. Serine 42 and serine 48 each carry an O-linked (Xyl...) (glycosaminoglycan) serine glycan. 2 cysteine pairs are disulfide-bonded: cysteine 64–cysteine 70 and cysteine 68–cysteine 77. LRR repeat units follow at residues lysine 83–isoleucine 103, serine 104–isoleucine 127, serine 128–leucine 151, valine 152–isoleucine 172, arginine 173–leucine 196, glutamate 197–leucine 221, threonine 222–isoleucine 242, glutamine 243–isoleucine 266, arginine 267–leucine 290, serine 291–isoleucine 313, threonine 314–valine 343, and proline 344–lysine 369. Residues serine 181 and serine 199 are each glycosylated (O-linked (Xyl...) (glycosaminoglycan) serine). N-linked (GlcNAc...) asparagine glycans are attached at residues asparagine 271 and asparagine 312. An intrachain disulfide couples cysteine 322 to cysteine 355.

This sequence belongs to the small leucine-rich proteoglycan (SLRP) family. SLRP class I subfamily. In terms of assembly, homodimer. Forms a ternary complex with MFAP2 and ELN. Post-translationally, the two attached glycosaminoglycan chains can be either chondroitin sulfate or dermatan sulfate. In terms of tissue distribution, found in several connective tissues, especially in articular cartilages.

The protein localises to the secreted. The protein resides in the extracellular space. It is found in the extracellular matrix. Functionally, may be involved in collagen fiber assembly. This chain is Biglycan (BGN), found in Bos taurus (Bovine).